We begin with the raw amino-acid sequence, 364 residues long: Phosphate acyltransferase (364 aa).

A disordered region spans residues 343–364 (IRTSGRSGGKSKSSAAREDGAA).

Belongs to the PlsX family. In terms of assembly, homodimer. Probably interacts with PlsY.

Its subcellular location is the cytoplasm. It catalyses the reaction a fatty acyl-[ACP] + phosphate = an acyl phosphate + holo-[ACP]. It participates in lipid metabolism; phospholipid metabolism. In terms of biological role, catalyzes the reversible formation of acyl-phosphate (acyl-PO(4)) from acyl-[acyl-carrier-protein] (acyl-ACP). This enzyme utilizes acyl-ACP as fatty acyl donor, but not acyl-CoA. The protein is Phosphate acyltransferase of Novosphingobium aromaticivorans (strain ATCC 700278 / DSM 12444 / CCUG 56034 / CIP 105152 / NBRC 16084 / F199).